The following is a 76-amino-acid chain: Small ribosomal subunit protein bS18 (76 aa).

Belongs to the bacterial ribosomal protein bS18 family. As to quaternary structure, part of the 30S ribosomal subunit. Forms a tight heterodimer with protein bS6.

Binds as a heterodimer with protein bS6 to the central domain of the 16S rRNA, where it helps stabilize the platform of the 30S subunit. This is Small ribosomal subunit protein bS18 from Xanthomonas campestris pv. campestris (strain 8004).